The sequence spans 413 residues: Glucose-1-phosphate adenylyltransferase (413 aa).

Alpha-D-glucose 1-phosphate-binding positions include Tyr-102, Gly-167, 182 to 183 (EK), and Ser-200.

This sequence belongs to the bacterial/plant glucose-1-phosphate adenylyltransferase family. In terms of assembly, homotetramer.

The catalysed reaction is alpha-D-glucose 1-phosphate + ATP + H(+) = ADP-alpha-D-glucose + diphosphate. Its pathway is glycan biosynthesis; glycogen biosynthesis. Its function is as follows. Involved in the biosynthesis of ADP-glucose, a building block required for the elongation reactions to produce glycogen. Catalyzes the reaction between ATP and alpha-D-glucose 1-phosphate (G1P) to produce pyrophosphate and ADP-Glc. This is Glucose-1-phosphate adenylyltransferase from Deinococcus deserti (strain DSM 17065 / CIP 109153 / LMG 22923 / VCD115).